A 230-amino-acid polypeptide reads, in one-letter code: 2,3-bisphosphoglycerate-dependent phosphoglycerate mutase (230 aa).

Residues Arg-8–Asn-15, Thr-21–Gly-22, Arg-60, Glu-87–Tyr-90, Lys-98, Arg-114–Arg-115, and Gly-183–Asn-184 each bind substrate. The active-site Tele-phosphohistidine intermediate is His-9. The Proton donor/acceptor role is filled by Glu-87.

The protein belongs to the phosphoglycerate mutase family. BPG-dependent PGAM subfamily.

It catalyses the reaction (2R)-2-phosphoglycerate = (2R)-3-phosphoglycerate. It functions in the pathway carbohydrate degradation; glycolysis; pyruvate from D-glyceraldehyde 3-phosphate: step 3/5. Catalyzes the interconversion of 2-phosphoglycerate and 3-phosphoglycerate. This is 2,3-bisphosphoglycerate-dependent phosphoglycerate mutase from Streptococcus uberis (strain ATCC BAA-854 / 0140J).